Consider the following 1380-residue polypeptide: Carboxypeptidase D (1380 aa).

A signal peptide spans 1-31 (MASGRDERPPWRLGRLLLLMCLLLLGSSARA). Residues 32–1299 (AHIKKAEATT…DNRIFGLPRE (1268 aa)) lie on the Extracellular side of the membrane. The 324-residue stretch at 57 to 380 (RYYHEEELES…ESLITLIEKV (324 aa)) folds into the Peptidase M14 1 domain. The Zn(2+) site is built by histidine 139 and glutamate 142. Residues 162–164 (RGD) carry the Cell attachment site motif. N-linked (GlcNAc...) asparagine glycosylation is present at asparagine 172. A disordered region spans residues 190 to 232 (AREGDCGFGDGGPSGASGRDNSRGRDLNRSFPDQFSTGEPPAL). A compositionally biased stretch (gly residues) spans 195–204 (CGFGDGGPSG). A glycan (N-linked (GlcNAc...) asparagine) is linked at asparagine 217. Histidine 257 serves as a coordination point for Zn(2+). Position 265 is a phosphotyrosine (tyrosine 265). The residue at position 270 (serine 270) is a Phosphoserine. The active-site Proton donor/acceptor is the glutamate 350. 4 N-linked (GlcNAc...) asparagine glycosylation sites follow: asparagine 399, asparagine 410, asparagine 429, and asparagine 522. A Peptidase M14 2 domain is found at 502–792 (HHHHFPDMEI…RSLIQFMKQV (291 aa)). Zn(2+) is bound by residues histidine 564 and glutamate 567. Residue asparagine 626 is glycosylated (N-linked (GlcNAc...) asparagine). Histidine 671 lines the Zn(2+) pocket. The active-site Proton donor/acceptor is glutamate 762. N-linked (GlcNAc...) asparagine glycans are attached at residues asparagine 811, asparagine 855, asparagine 867, and asparagine 879. The segment at 874 to 899 (STDSNNESKKGKGASSSTNDASDPTT) is disordered. Residues 887-897 (ASSSTNDASDP) are compositionally biased toward polar residues. Residues 932-1211 (RYHSYKDLSE…RSLLSMLVEV (280 aa)) form the Peptidase M14 3 domain. N-linked (GlcNAc...) asparagine glycosylation is found at asparagine 955, asparagine 978, asparagine 1070, and asparagine 1142. Residues 1300–1320 (LVVTVSGATMSALILTACIIW) form a helical membrane-spanning segment. S-palmitoyl cysteine attachment occurs at residues cysteine 1317, cysteine 1321, and cysteine 1323. The Cytoplasmic portion of the chain corresponds to 1321 to 1380 (CICSIKSNRHKDGFHRLRQHHDEYEDEIRMMSTGSKKSLLSHEFQDETDTEEETLYSSKH). Phosphoserine occurs at positions 1358 and 1361. Residues 1359 to 1380 (LLSHEFQDETDTEEETLYSSKH) are disordered. 2 positions are modified to phosphothreonine: threonine 1368 and threonine 1370.

It belongs to the peptidase M14 family. The cofactor is Zn(2+). In terms of tissue distribution, highly expressed in placenta, pancreas and hepatoma cells. Lower levels found in skeletal muscle, heart and colon carcinoma and melanoma cell lines.

Its subcellular location is the cell membrane. It catalyses the reaction Releases C-terminal Arg and Lys from polypeptides.. The polypeptide is Carboxypeptidase D (CPD) (Homo sapiens (Human)).